The primary structure comprises 316 residues: NAD kinase 1 (316 aa).

D67 functions as the Proton acceptor in the catalytic mechanism. 67 to 68 (DG) contributes to the NAD(+) binding site. The disordered stretch occupies residues 132-151 (RSAEERADAPTPLQQPDVED). Residues 160 to 161 (ND), R190, and D192 each bind NAD(+).

The protein belongs to the NAD kinase family. Requires a divalent metal cation as cofactor.

The protein resides in the cytoplasm. It catalyses the reaction NAD(+) + ATP = ADP + NADP(+) + H(+). Involved in the regulation of the intracellular balance of NAD and NADP, and is a key enzyme in the biosynthesis of NADP. Catalyzes specifically the phosphorylation on 2'-hydroxyl of the adenosine moiety of NAD to yield NADP. This chain is NAD kinase 1, found in Parasynechococcus marenigrum (strain WH8102).